An 858-amino-acid chain; its full sequence is Cone cGMP-specific 3',5'-cyclic phosphodiesterase subunit alpha' (858 aa).

GAF domains follow at residues 75-224 and 256-433; these read TPEQ…SIIL and DVER…GWSL. Residues S97, D116, 169–172, and T176 contribute to the 3',5'-cyclic GMP site; that span reads DKQT. Residues 486 to 819 form the PDEase domain; sequence EEKQLVAILK…VEWKSLADEY (334 aa). Residue H562 is the Proton donor of the active site. 4 residues coordinate a divalent metal cation: H566, H602, D603, and D723. The segment covering 830-852 has biased composition (basic and acidic residues); the sequence is AKKQEGGAEKAAEDSGGGDDKKS. A disordered region spans residues 830-858; the sequence is AKKQEGGAEKAAEDSGGGDDKKSKTCLML. A Cysteine methyl ester modification is found at C855. C855 carries S-geranylgeranyl cysteine lipidation. The propeptide at 856-858 is removed in mature form; the sequence is LML.

The protein belongs to the cyclic nucleotide phosphodiesterase family. As to quaternary structure, composed of two alpha' subunits that are associated with 3 smaller proteins of 11, 13, and 15 kDa. Requires a divalent metal cation as cofactor.

It is found in the cell membrane. It carries out the reaction 3',5'-cyclic GMP + H2O = GMP + H(+). In terms of biological role, as cone-specific cGMP phosphodiesterase, it plays an essential role in light detection and cone phototransduction by rapidly decreasing intracellular levels of cGMP. The polypeptide is Cone cGMP-specific 3',5'-cyclic phosphodiesterase subunit alpha' (PDE6C) (Homo sapiens (Human)).